The primary structure comprises 384 residues: Chorismate synthase (384 aa).

NADP(+)-binding residues include Arg-39 and Arg-45. Residues 130 to 132 (RSS), 248 to 249 (NA), Gly-292, 307 to 311 (KPIPT), and Arg-333 contribute to the FMN site.

Belongs to the chorismate synthase family. In terms of assembly, homotetramer. Requires FMNH2 as cofactor.

It catalyses the reaction 5-O-(1-carboxyvinyl)-3-phosphoshikimate = chorismate + phosphate. It functions in the pathway metabolic intermediate biosynthesis; chorismate biosynthesis; chorismate from D-erythrose 4-phosphate and phosphoenolpyruvate: step 7/7. In terms of biological role, catalyzes the anti-1,4-elimination of the C-3 phosphate and the C-6 proR hydrogen from 5-enolpyruvylshikimate-3-phosphate (EPSP) to yield chorismate, which is the branch point compound that serves as the starting substrate for the three terminal pathways of aromatic amino acid biosynthesis. This reaction introduces a second double bond into the aromatic ring system. The sequence is that of Chorismate synthase from Exiguobacterium sibiricum (strain DSM 17290 / CCUG 55495 / CIP 109462 / JCM 13490 / 255-15).